We begin with the raw amino-acid sequence, 409 residues long: AT-rich interactive domain-containing protein 3C (409 aa).

Over residues 1 to 14 (MEALQRQQAARLAQ) the composition is skewed to low complexity. The disordered stretch occupies residues 1-91 (MEALQRQQAA…SPSSQSPGIQ (91 aa)). Positions 19-30 (LAPPRLPLPQPP) are enriched in pro residues. The segment covering 49–70 (AEEEEGAEDEEGETPLAEEETA) has biased composition (acidic residues). The ARID domain occupies 110-202 (DPKRKEFLDD…YLYPYECETR (93 aa)). 3 disordered regions span residues 233–274 (NLAG…PAHA), 306–333 (TREK…RLGA), and 385–409 (PVPA…STLP). The span at 235 to 257 (AGPTPRGAPGPASSHGPAPTATP) shows a compositional bias: low complexity. An REKLES domain is found at 301–386 (LASEATREKL…GILFARRQPV (86 aa)). Residues 306-320 (TREKLAPEEPPEKRA) are compositionally biased toward basic and acidic residues. Residues 393–402 (TNPPPLPSTG) show a composition bias toward pro residues.

Interacts (via REKLES DOMAIN) with NPM1; the interaction mediates ARID3C nuclear shuttling.

It is found in the nucleus. Its function is as follows. Transcription factor involved in monocyte-to-macrophage differentiation. Forms a complex with NPM1 to translocate to the nucleus, acting as a transcription factor that promotes the expression of the genes involved in macrophage differentiation, such as STAT3, STAT1 and JUNB. This is AT-rich interactive domain-containing protein 3C (Arid3c) from Mus musculus (Mouse).